Reading from the N-terminus, the 146-residue chain is Large ribosomal subunit protein bL17 (146 aa).

Over residues 124–134 (EASRATRAAAS) the composition is skewed to low complexity. The segment at 124-146 (EASRATRAAASKKAEEEAASEAE) is disordered.

Belongs to the bacterial ribosomal protein bL17 family. Part of the 50S ribosomal subunit. Contacts protein L32.

In Corynebacterium kroppenstedtii (strain DSM 44385 / JCM 11950 / CIP 105744 / CCUG 35717), this protein is Large ribosomal subunit protein bL17.